Consider the following 284-residue polypeptide: P2R1A-PPP2R2A-interacting phosphatase regulator 1 (284 aa).

3 disordered regions span residues 1 to 32 (MAQE…SNSA), 112 to 198 (EESL…PIKR), and 235 to 284 (AHTL…LPID). Composition is skewed to low complexity over residues 152–164 (SPSL…SSGL) and 172–184 (PTRR…SQSP). Polar residues predominate over residues 258–269 (STGSPVSLSDSR).

The protein belongs to the FAM122 family.

The protein localises to the nucleus. It is found in the cytoplasm. In terms of biological role, acts as an inhibitor of serine/threonine-protein phosphatase 2A (PP2A) activity. Potentiates ubiquitin-mediated proteasomal degradation of serine/threonine-protein phosphatase 2A catalytic subunit alpha (PPP2CA). Inhibits PP2A-mediated dephosphorylation of WEE1, promoting ubiquitin-mediated proteolysis of WEE1, thereby releasing G2/M checkpoint. This Gallus gallus (Chicken) protein is P2R1A-PPP2R2A-interacting phosphatase regulator 1.